Here is a 400-residue protein sequence, read N- to C-terminus: Formate-dependent phosphoribosylglycinamide formyltransferase (400 aa).

N(1)-(5-phospho-beta-D-ribosyl)glycinamide is bound by residues 22-23 (EL) and Glu82. ATP contacts are provided by residues Arg115, Lys156, 161-166 (SSGKGQ), 196-199 (EGFI), and Glu204. Residues 120–309 (RLAAETLGLP…EFALHARAIL (190 aa)) form the ATP-grasp domain. Mg(2+) contacts are provided by Glu268 and Glu280. N(1)-(5-phospho-beta-D-ribosyl)glycinamide contacts are provided by residues Asp287, Lys361, and 368-369 (RR).

The protein belongs to the PurK/PurT family. As to quaternary structure, homodimer.

It catalyses the reaction N(1)-(5-phospho-beta-D-ribosyl)glycinamide + formate + ATP = N(2)-formyl-N(1)-(5-phospho-beta-D-ribosyl)glycinamide + ADP + phosphate + H(+). Its pathway is purine metabolism; IMP biosynthesis via de novo pathway; N(2)-formyl-N(1)-(5-phospho-D-ribosyl)glycinamide from N(1)-(5-phospho-D-ribosyl)glycinamide (formate route): step 1/1. In terms of biological role, involved in the de novo purine biosynthesis. Catalyzes the transfer of formate to 5-phospho-ribosyl-glycinamide (GAR), producing 5-phospho-ribosyl-N-formylglycinamide (FGAR). Formate is provided by PurU via hydrolysis of 10-formyl-tetrahydrofolate. The chain is Formate-dependent phosphoribosylglycinamide formyltransferase from Xanthomonas oryzae pv. oryzae (strain PXO99A).